Consider the following 380-residue polypeptide: Probable pectin lyase A (380 aa).

The signal sequence occupies residues 1–20 (MRYTSLFTAVTAALASTAAA). 2 cysteine pairs are disulfide-bonded: Cys83-Cys102 and Cys92-Cys226. A glycan (N-linked (GlcNAc...) asparagine) is linked at Asn129. The active site involves Arg256. Cys323 and Cys331 are oxidised to a cystine.

The protein belongs to the polysaccharide lyase 1 family.

The protein localises to the secreted. The catalysed reaction is Eliminative cleavage of (1-&gt;4)-alpha-D-galacturonan methyl ester to give oligosaccharides with 4-deoxy-6-O-methyl-alpha-D-galact-4-enuronosyl groups at their non-reducing ends.. Pectinolytic enzymes consist of four classes of enzymes: pectin lyase, polygalacturonase, pectin methylesterase and rhamnogalacturonase. Among pectinolytic enzymes, pectin lyase is the most important in depolymerization of pectin, since it cleaves internal glycosidic bonds of highly methylated pectins. This is Probable pectin lyase A (pelA) from Aspergillus fumigatus (strain ATCC MYA-4609 / CBS 101355 / FGSC A1100 / Af293) (Neosartorya fumigata).